A 193-amino-acid chain; its full sequence is Putative protein-glutamate methylesterase/protein-glutamine glutaminase (193 aa).

A CheB-type methylesterase domain is found at 1–179; sequence MNYEAIVIGV…DYVLSLEKIA (179 aa). Active-site residues include Ser-11, His-38, and Asp-131.

It belongs to the CheB family.

It is found in the cytoplasm. The enzyme catalyses [protein]-L-glutamate 5-O-methyl ester + H2O = L-glutamyl-[protein] + methanol + H(+). It carries out the reaction L-glutaminyl-[protein] + H2O = L-glutamyl-[protein] + NH4(+). May be involved in chemotaxis. The sequence is that of Putative protein-glutamate methylesterase/protein-glutamine glutaminase (cheB2) from Leptospira interrogans serogroup Icterohaemorrhagiae serovar copenhageni (strain Fiocruz L1-130).